We begin with the raw amino-acid sequence, 348 residues long: Erlin-1 (348 aa).

Topologically, residues 1-7 (MNMTQAR) are cytoplasmic. A helical transmembrane segment spans residues 8–28 (VLVAAVVGLVAVLLYASIHKI). Residues 29 to 348 (EEGHLAVYYR…NVIQNKESTG (320 aa)) are Lumenal-facing. N108 is a glycosylation site (N-linked (GlcNAc...) asparagine). K269 carries the post-translational modification N6-acetyllysine. Positions 325-348 (SSLPSKEALEPSGENVIQNKESTG) are disordered. The segment covering 339 to 348 (NVIQNKESTG) has biased composition (polar residues).

Belongs to the band 7/mec-2 family. Forms a heteromeric complex with ERLIN2. In complex with ERLIN2, interacts with RNF170. Interacts with AMFR and SYVN1. Deubiquitinated by USP25; leading to stabilization. Expressed in heart, placenta, liver, kidney, pancreas, prostate, testis, ovary and small intestine.

Its subcellular location is the endoplasmic reticulum membrane. Functionally, component of the ERLIN1/ERLIN2 complex which mediates the endoplasmic reticulum-associated degradation (ERAD) of inositol 1,4,5-trisphosphate receptors (IP3Rs). Involved in regulation of cellular cholesterol homeostasis by regulation the SREBP signaling pathway. Binds cholesterol and may promote ER retention of the SCAP-SREBF complex. (Microbial infection) Required early in hepatitis C virus (HCV) infection to initiate RNA replication, and later in the infection to support infectious virus production. The protein is Erlin-1 of Homo sapiens (Human).